We begin with the raw amino-acid sequence, 126 residues long: Large ribosomal subunit protein bL12 (126 aa).

It belongs to the bacterial ribosomal protein bL12 family. As to quaternary structure, homodimer. Part of the ribosomal stalk of the 50S ribosomal subunit. Forms a multimeric L10(L12)X complex, where L10 forms an elongated spine to which 2 to 4 L12 dimers bind in a sequential fashion. Binds GTP-bound translation factors.

Its function is as follows. Forms part of the ribosomal stalk which helps the ribosome interact with GTP-bound translation factors. Is thus essential for accurate translation. This is Large ribosomal subunit protein bL12 from Caulobacter sp. (strain K31).